A 217-amino-acid chain; its full sequence is Zinc finger CCHC-type and RNA-binding motif-containing protein 1 (217 aa).

The region spanning 10-88 (STVYVSNLPF…RVIKASIAID (79 aa)) is the RRM domain. A CCHC-type zinc finger spans residues 105–122 (SKCYECGESGHLSYACPK). The interval 120 to 217 (CPKNMLGERE…YFSDEEELSD (98 aa)) is disordered. Acidic residues predominate over residues 145–163 (PEEEIEEVEESEDEGEDPA). S155, S210, and S216 each carry phosphoserine.

As to quaternary structure, component of the U11/U12 snRNPs that are part of the U12-type spliceosome.

It localises to the nucleus. The protein resides in the nucleoplasm. The chain is Zinc finger CCHC-type and RNA-binding motif-containing protein 1 (ZCRB1) from Homo sapiens (Human).